Consider the following 383-residue polypeptide: Guanine nucleotide-binding protein alpha-1 subunit (383 aa).

A disordered region spans residues 1–20; it reads MGLLCSRSRHHTEDTDENTQ. Residue glycine 2 is the site of N-myristoyl glycine attachment. Cysteine 5 carries the S-palmitoyl cysteine lipid modification. One can recognise a G-alpha domain in the interval 37 to 383; that stretch reads HIRKLLLLGA…RRNLLEAGLL (347 aa). The segment at 40-53 is G1 motif; that stretch reads KLLLLGAGESGKST. 15 residues coordinate GTP: glutamate 48, serine 49, glycine 50, lysine 51, serine 52, threonine 53, aspartate 162, leucine 187, tyrosine 188, threonine 193, glycine 221, asparagine 287, lysine 288, aspartate 290, and alanine 355. Serine 52 contacts Mg(2+). A G2 motif region spans residues 185–193; the sequence is DVLYARVRT. Threonine 193 is a binding site for Mg(2+). The tract at residues 214–223 is G3 motif; it reads YRLFDVGGQR. A G4 motif region spans residues 283–290; sequence MLFLNKFD. Residues 353–358 are G5 motif; that stretch reads TTALDQ.

This sequence belongs to the G-alpha family. In terms of assembly, g proteins are composed of 3 units; alpha, beta and gamma. The alpha chain contains the guanine nucleotide binding site. Interacts with RGS1, THF1, the pirin protein PRN1, GTG1 and GTG2. Binds to GCR1. May interact with ADT3. No interactions with RACK1A, RACK1B or RACK1C. Interacts with PLDALPHA1. Interacts with CAND2/PMTR1. The cofactor is Mg(2+). As to expression, more abundant in roots and/or leaves.

Its subcellular location is the cell membrane. Functionally, exhibits a fast rate of basal nucleotide exchange. Guanine nucleotide-binding proteins (G proteins) are involved as modulators or transducers in various transmembrane signaling systems. Together with GCR1, may regulate the cell cycle via a signaling cascade that uses phosphatidylinositol-specific phospholipase C (PI-PLC) as an effector and inositol 1,4,5-trisphosphate (IP(3)) as a second messenger. Promotes abscisic acid (ABA) responses in guard cells. Involved in the blue light (BL) signaling. Together with GCR1 and ADT3, required for BL-mediated synthesis of phenylpyruvate and subsequently of phenylalanine (Phe), in etiolated seedlings. Modulates root architecture (e.g. lateral root formation). Negatively regulated by RGS1. In collaboration with CAND2/PMTR1, regulates the melatonin-mediated stomatal closure involving H(2)O(2) and Ca(2+) signals. The chain is Guanine nucleotide-binding protein alpha-1 subunit from Arabidopsis thaliana (Mouse-ear cress).